The primary structure comprises 172 residues: Large ribosomal subunit protein bL21m (172 aa).

Residues 1–20 (MIRNIGSNLMKSSSSILLRN) constitute a mitochondrion transit peptide.

This sequence belongs to the bacterial ribosomal protein bL21 family.

It is found in the mitochondrion. The chain is Large ribosomal subunit protein bL21m (mrpl21) from Dictyostelium discoideum (Social amoeba).